Reading from the N-terminus, the 223-residue chain is Small ribosomal subunit protein uS3 (223 aa).

Positions 38–106 (IRKFLDEKLK…QVHINIVEIK (69 aa)) constitute a KH type-2 domain.

Belongs to the universal ribosomal protein uS3 family. In terms of assembly, part of the 30S ribosomal subunit. Forms a tight complex with proteins S10 and S14.

Binds the lower part of the 30S subunit head. Binds mRNA in the 70S ribosome, positioning it for translation. The protein is Small ribosomal subunit protein uS3 of Lactobacillus delbrueckii subsp. bulgaricus (strain ATCC 11842 / DSM 20081 / BCRC 10696 / JCM 1002 / NBRC 13953 / NCIMB 11778 / NCTC 12712 / WDCM 00102 / Lb 14).